Consider the following 430-residue polypeptide: Serine--tRNA ligase (430 aa).

The segment at 47 to 66 (AQAEQNKASKEAGAAKGRGD) is disordered. 231 to 233 (TSE) is an L-serine binding site. 262 to 264 (RSE) is an ATP binding site. Glu-285 lines the L-serine pocket. 349-352 (EISS) contributes to the ATP binding site. Ser-385 serves as a coordination point for L-serine.

The protein belongs to the class-II aminoacyl-tRNA synthetase family. Type-1 seryl-tRNA synthetase subfamily. As to quaternary structure, homodimer. The tRNA molecule binds across the dimer.

The protein localises to the cytoplasm. The catalysed reaction is tRNA(Ser) + L-serine + ATP = L-seryl-tRNA(Ser) + AMP + diphosphate + H(+). It carries out the reaction tRNA(Sec) + L-serine + ATP = L-seryl-tRNA(Sec) + AMP + diphosphate + H(+). It functions in the pathway aminoacyl-tRNA biosynthesis; selenocysteinyl-tRNA(Sec) biosynthesis; L-seryl-tRNA(Sec) from L-serine and tRNA(Sec): step 1/1. Catalyzes the attachment of serine to tRNA(Ser). Is also able to aminoacylate tRNA(Sec) with serine, to form the misacylated tRNA L-seryl-tRNA(Sec), which will be further converted into selenocysteinyl-tRNA(Sec). This chain is Serine--tRNA ligase, found in Paracoccus denitrificans (strain Pd 1222).